Reading from the N-terminus, the 706-residue chain is Fatty acid oxidation complex subunit alpha (706 aa).

An enoyl-CoA hydratase region spans residues 1 to 188 (MEKTFSLSRR…KMGLVDDVVP (188 aa)). The segment at 308-706 (RKVAKAVVLG…AMAAEGKTFY (399 aa)) is 3-hydroxyacyl-CoA dehydrogenase.

The protein in the N-terminal section; belongs to the enoyl-CoA hydratase/isomerase family. It in the central section; belongs to the 3-hydroxyacyl-CoA dehydrogenase family. As to quaternary structure, heterotetramer of two alpha chains (FadJ) and two beta chains (FadI).

The protein resides in the cytoplasm. The catalysed reaction is a (3S)-3-hydroxyacyl-CoA = a (2E)-enoyl-CoA + H2O. It carries out the reaction a 4-saturated-(3S)-3-hydroxyacyl-CoA = a (3E)-enoyl-CoA + H2O. It catalyses the reaction a (3S)-3-hydroxyacyl-CoA + NAD(+) = a 3-oxoacyl-CoA + NADH + H(+). The enzyme catalyses (3S)-3-hydroxybutanoyl-CoA = (3R)-3-hydroxybutanoyl-CoA. It functions in the pathway lipid metabolism; fatty acid beta-oxidation. Catalyzes the formation of a hydroxyacyl-CoA by addition of water on enoyl-CoA. Also exhibits 3-hydroxyacyl-CoA epimerase and 3-hydroxyacyl-CoA dehydrogenase activities. The chain is Fatty acid oxidation complex subunit alpha from Shewanella amazonensis (strain ATCC BAA-1098 / SB2B).